The following is a 130-amino-acid chain: Glycine cleavage system H protein (130 aa).

Residues glutamine 22 to alanine 103 form the Lipoyl-binding domain. Lysine 63 bears the N6-lipoyllysine mark.

It belongs to the GcvH family. The glycine cleavage system is composed of four proteins: P, T, L and H. The cofactor is (R)-lipoate.

Its function is as follows. The glycine cleavage system catalyzes the degradation of glycine. The H protein shuttles the methylamine group of glycine from the P protein to the T protein. The sequence is that of Glycine cleavage system H protein from Syntrophomonas wolfei subsp. wolfei (strain DSM 2245B / Goettingen).